A 102-amino-acid chain; its full sequence is Large ribosomal subunit protein uL24 (102 aa).

The protein belongs to the universal ribosomal protein uL24 family. Part of the 50S ribosomal subunit.

In terms of biological role, one of two assembly initiator proteins, it binds directly to the 5'-end of the 23S rRNA, where it nucleates assembly of the 50S subunit. Its function is as follows. One of the proteins that surrounds the polypeptide exit tunnel on the outside of the subunit. The chain is Large ribosomal subunit protein uL24 from Cupriavidus metallidurans (strain ATCC 43123 / DSM 2839 / NBRC 102507 / CH34) (Ralstonia metallidurans).